A 141-amino-acid chain; its full sequence is Nucleoside triphosphatase NudI (141 aa).

In terms of domain architecture, Nudix hydrolase spans 1 to 141; sequence MRQRTIVCPL…RKTLRLKGLL (141 aa). The Nudix box signature appears at 38–59; that stretch reads GGVEPGERIEEALRREIREELG.

The protein belongs to the Nudix hydrolase family. NudI subfamily. As to quaternary structure, monomer. Mg(2+) is required as a cofactor.

It carries out the reaction a ribonucleoside 5'-triphosphate + H2O = a ribonucleoside 5'-phosphate + diphosphate + H(+). The enzyme catalyses a 2'-deoxyribonucleoside 5'-triphosphate + H2O = a 2'-deoxyribonucleoside 5'-phosphate + diphosphate + H(+). The catalysed reaction is dUTP + H2O = dUMP + diphosphate + H(+). It catalyses the reaction dTTP + H2O = dTMP + diphosphate + H(+). It carries out the reaction dCTP + H2O = dCMP + diphosphate + H(+). In terms of biological role, catalyzes the hydrolysis of nucleoside triphosphates, with a preference for pyrimidine deoxynucleoside triphosphates (dUTP, dTTP and dCTP). This is Nucleoside triphosphatase NudI from Escherichia coli O9:H4 (strain HS).